Consider the following 55-residue polypeptide: UPF0391 membrane protein Meso_3110 (55 aa).

The next 2 membrane-spanning stretches (helical) occupy residues Trp-4 to Ala-24 and Ile-30 to Leu-50.

Belongs to the UPF0391 family.

It localises to the cell membrane. The chain is UPF0391 membrane protein Meso_3110 from Chelativorans sp. (strain BNC1).